Reading from the N-terminus, the 268-residue chain is Ribosomal RNA small subunit methyltransferase A (268 aa).

S-adenosyl-L-methionine-binding residues include Asn17, Leu19, Gly44, Glu65, Asp89, and Asn110.

Belongs to the class I-like SAM-binding methyltransferase superfamily. rRNA adenine N(6)-methyltransferase family. RsmA subfamily.

Its subcellular location is the cytoplasm. It carries out the reaction adenosine(1518)/adenosine(1519) in 16S rRNA + 4 S-adenosyl-L-methionine = N(6)-dimethyladenosine(1518)/N(6)-dimethyladenosine(1519) in 16S rRNA + 4 S-adenosyl-L-homocysteine + 4 H(+). Its function is as follows. Specifically dimethylates two adjacent adenosines (A1518 and A1519) in the loop of a conserved hairpin near the 3'-end of 16S rRNA in the 30S particle. May play a critical role in biogenesis of 30S subunits. This chain is Ribosomal RNA small subunit methyltransferase A, found in Acidithiobacillus ferrooxidans (strain ATCC 53993 / BNL-5-31) (Leptospirillum ferrooxidans (ATCC 53993)).